A 768-amino-acid chain; its full sequence is Translation factor GUF1 homolog, mitochondrial (768 aa).

The transit peptide at 1–29 (MRLWNRFSRLGNLLCACAACGCSFTPWRC) directs the protein to the mitochondrion. In terms of domain architecture, tr-type G spans 110 to 293 (SNIRNVAVVA…AIIERVPSPS (184 aa)). Residues 119 to 126 (AHVDHGKT), 184 to 188 (DTPGH), and 238 to 241 (TKMD) contribute to the GTP site.

The protein belongs to the TRAFAC class translation factor GTPase superfamily. Classic translation factor GTPase family. LepA subfamily.

The protein resides in the mitochondrion inner membrane. The catalysed reaction is GTP + H2O = GDP + phosphate + H(+). Promotes mitochondrial protein synthesis. May act as a fidelity factor of the translation reaction, by catalyzing a one-codon backward translocation of tRNAs on improperly translocated ribosomes. Binds to mitochondrial ribosomes in a GTP-dependent manner. This Trypanosoma brucei brucei (strain 927/4 GUTat10.1) protein is Translation factor GUF1 homolog, mitochondrial.